The chain runs to 316 residues: MPIEGGKTDMERIGLFSEMEYITVGDKYVSPFNRPFNEAASKNRQILPGGTKEMSSLQAGYFDSQFARIFEGEGYVNLNQVRRRYMLAESKKNLGKAFIPSSGEKKPSGLGSYYGTIGGPVPFFSAQIKPKDKYQPPGKNLYTNPGKKGTGYGYANVTIGKQLSHSSDLYDAARQSYKKESEEHHRLIKGSPFKLHLHPKDYFDTNPYFLEHHLPPLRREEKKEVSFKPFKPSSPGKKAGGMKAGAFDPYPAHSADPYVVKVEKAIPSKGERVFHPPNGPKSRPVESIMALNVKRALNVKNYKNASSTTLGKQLVF.

A disordered region spans residues 220 to 242 (EEKKEVSFKPFKPSSPGKKAGGM). Residues 227-237 (FKPFKPSSPGK) show a composition bias toward low complexity.

Belongs to the CFAP96 family.

It localises to the cytoplasm. The protein resides in the cytoskeleton. Its subcellular location is the microtubule organizing center. It is found in the centrosome. The sequence is that of Cilia-and flagella-associated protein 96 (Cfap96) from Mus musculus (Mouse).